The following is a 297-amino-acid chain: 1D-myo-inositol 2-acetamido-2-deoxy-alpha-D-glucopyranoside deacetylase (297 aa).

H14, D17, and H149 together coordinate Zn(2+).

This sequence belongs to the MshB deacetylase family. The cofactor is Zn(2+).

The catalysed reaction is 1D-myo-inositol 2-acetamido-2-deoxy-alpha-D-glucopyranoside + H2O = 1D-myo-inositol 2-amino-2-deoxy-alpha-D-glucopyranoside + acetate. Functionally, catalyzes the deacetylation of 1D-myo-inositol 2-acetamido-2-deoxy-alpha-D-glucopyranoside (GlcNAc-Ins) in the mycothiol biosynthesis pathway. The chain is 1D-myo-inositol 2-acetamido-2-deoxy-alpha-D-glucopyranoside deacetylase from Thermomonospora curvata (strain ATCC 19995 / DSM 43183 / JCM 3096 / KCTC 9072 / NBRC 15933 / NCIMB 10081 / Henssen B9).